The sequence spans 192 residues: Holliday junction branch migration complex subunit RuvA (192 aa).

Residues 1–61 (MFEYLKGIVA…DTGITLYGFL (61 aa)) form a domain I region. The interval 62–137 (SLEDKELFLK…KLGDYVKKSA (76 aa)) is domain II. Residues 137–140 (AVAT) are flexible linker. Residues 141 to 192 (DLTPSLQDALLALVALGYTQKEVDRITPKLAKLPENTADGYIKEALALLLKK) are domain III.

It belongs to the RuvA family. Homotetramer. Forms an RuvA(8)-RuvB(12)-Holliday junction (HJ) complex. HJ DNA is sandwiched between 2 RuvA tetramers; dsDNA enters through RuvA and exits via RuvB. An RuvB hexamer assembles on each DNA strand where it exits the tetramer. Each RuvB hexamer is contacted by two RuvA subunits (via domain III) on 2 adjacent RuvB subunits; this complex drives branch migration. In the full resolvosome a probable DNA-RuvA(4)-RuvB(12)-RuvC(2) complex forms which resolves the HJ.

It is found in the cytoplasm. Its function is as follows. The RuvA-RuvB-RuvC complex processes Holliday junction (HJ) DNA during genetic recombination and DNA repair, while the RuvA-RuvB complex plays an important role in the rescue of blocked DNA replication forks via replication fork reversal (RFR). RuvA specifically binds to HJ cruciform DNA, conferring on it an open structure. The RuvB hexamer acts as an ATP-dependent pump, pulling dsDNA into and through the RuvAB complex. HJ branch migration allows RuvC to scan DNA until it finds its consensus sequence, where it cleaves and resolves the cruciform DNA. This Lactobacillus gasseri (strain ATCC 33323 / DSM 20243 / BCRC 14619 / CIP 102991 / JCM 1131 / KCTC 3163 / NCIMB 11718 / NCTC 13722 / AM63) protein is Holliday junction branch migration complex subunit RuvA.